We begin with the raw amino-acid sequence, 269 residues long: Formamidopyrimidine-DNA glycosylase (269 aa).

Residue Pro-2 is the Schiff-base intermediate with DNA of the active site. The active-site Proton donor is the Glu-3. Lys-57 acts as the Proton donor; for beta-elimination activity in catalysis. Residues His-90, Arg-109, and Lys-150 each contribute to the DNA site. An FPG-type zinc finger spans residues Gln-235 to Cys-269. Arg-259 serves as the catalytic Proton donor; for delta-elimination activity.

This sequence belongs to the FPG family. In terms of assembly, monomer. Requires Zn(2+) as cofactor.

The catalysed reaction is Hydrolysis of DNA containing ring-opened 7-methylguanine residues, releasing 2,6-diamino-4-hydroxy-5-(N-methyl)formamidopyrimidine.. The enzyme catalyses 2'-deoxyribonucleotide-(2'-deoxyribose 5'-phosphate)-2'-deoxyribonucleotide-DNA = a 3'-end 2'-deoxyribonucleotide-(2,3-dehydro-2,3-deoxyribose 5'-phosphate)-DNA + a 5'-end 5'-phospho-2'-deoxyribonucleoside-DNA + H(+). Its function is as follows. Involved in base excision repair of DNA damaged by oxidation or by mutagenic agents. Acts as a DNA glycosylase that recognizes and removes damaged bases. Has a preference for oxidized purines, such as 7,8-dihydro-8-oxoguanine (8-oxoG). Has AP (apurinic/apyrimidinic) lyase activity and introduces nicks in the DNA strand. Cleaves the DNA backbone by beta-delta elimination to generate a single-strand break at the site of the removed base with both 3'- and 5'-phosphates. The polypeptide is Formamidopyrimidine-DNA glycosylase (Vibrio vulnificus (strain YJ016)).